A 458-amino-acid polypeptide reads, in one-letter code: ATP synthase subunit beta (458 aa).

148–155 is a binding site for ATP; that stretch reads GGAGVGKT.

This sequence belongs to the ATPase alpha/beta chains family. In terms of assembly, F-type ATPases have 2 components, CF(1) - the catalytic core - and CF(0) - the membrane proton channel. CF(1) has five subunits: alpha(3), beta(3), gamma(1), delta(1), epsilon(1). CF(0) has three main subunits: a(1), b(2) and c(9-12). The alpha and beta chains form an alternating ring which encloses part of the gamma chain. CF(1) is attached to CF(0) by a central stalk formed by the gamma and epsilon chains, while a peripheral stalk is formed by the delta and b chains.

Its subcellular location is the cell inner membrane. The enzyme catalyses ATP + H2O + 4 H(+)(in) = ADP + phosphate + 5 H(+)(out). Functionally, produces ATP from ADP in the presence of a proton gradient across the membrane. The catalytic sites are hosted primarily by the beta subunits. The sequence is that of ATP synthase subunit beta from Nitrosococcus oceani (strain ATCC 19707 / BCRC 17464 / JCM 30415 / NCIMB 11848 / C-107).